The following is a 560-amino-acid chain: DNA ligase B (560 aa).

Lys124 functions as the N6-AMP-lysine intermediate in the catalytic mechanism.

The protein belongs to the NAD-dependent DNA ligase family. LigB subfamily.

The enzyme catalyses NAD(+) + (deoxyribonucleotide)n-3'-hydroxyl + 5'-phospho-(deoxyribonucleotide)m = (deoxyribonucleotide)n+m + AMP + beta-nicotinamide D-nucleotide.. In terms of biological role, catalyzes the formation of phosphodiester linkages between 5'-phosphoryl and 3'-hydroxyl groups in double-stranded DNA using NAD as a coenzyme and as the energy source for the reaction. This Escherichia coli O81 (strain ED1a) protein is DNA ligase B.